A 126-amino-acid polypeptide reads, in one-letter code: Glycine cleavage system H protein (126 aa).

Residues 21 to 103 (TVTVGISDHA…YESGWIARIK (83 aa)) form the Lipoyl-binding domain. Lys-62 bears the N6-lipoyllysine mark.

This sequence belongs to the GcvH family. In terms of assembly, the glycine cleavage system is composed of four proteins: P, T, L and H. Requires (R)-lipoate as cofactor.

Its function is as follows. The glycine cleavage system catalyzes the degradation of glycine. The H protein shuttles the methylamine group of glycine from the P protein to the T protein. The sequence is that of Glycine cleavage system H protein from Aliivibrio fischeri (strain ATCC 700601 / ES114) (Vibrio fischeri).